The primary structure comprises 205 residues: High frequency lysogenization protein HflD homolog (205 aa).

This sequence belongs to the HflD family.

It is found in the cytoplasm. The protein localises to the cell inner membrane. The polypeptide is High frequency lysogenization protein HflD homolog (Haemophilus influenzae (strain PittEE)).